A 417-amino-acid chain; its full sequence is Calreticulin (417 aa).

An N-terminal signal peptide occupies residues 1–17 (MLLPVPLLLGLVGLAAA). The N-domain stretch occupies residues 18–197 (EPTIYFKEQF…NSQVESGSLE (180 aa)). Positions 26, 62, and 64 each coordinate Ca(2+). The residue at position 64 (lysine 64) is an N6-(2-hydroxyisobutyryl)lysine. Positions 109, 111, 128, and 135 each coordinate an alpha-D-glucoside. Cysteine 137 and cysteine 163 form a disulfide bridge. An N6-acetyllysine modification is found at lysine 159. One copy of the 1-1 repeat lies at 191–202 (VESGSLEDDWDF). The segment at 191–255 (VESGSLEDDW…DAKKPEDWDE (65 aa)) is 4 X approximate repeats. The interval 193 to 277 (SGSLEDDWDF…NPEYKGEWKP (85 aa)) is disordered. Residues 198 to 308 (DDWDFLPPKK…YSPDSNIYAY (111 aa)) are P-domain. Residues 207–251 (KIKDPDAVKPEDWDERAKIDDPTDSKPEDWDKPEHIPDPDAKKPE) show a composition bias toward basic and acidic residues. Lysine 209 is subject to N6-acetyllysine. 6 consecutive repeat copies span residues 210-221 (DPDAVKPEDWDE), 227-238 (DPTDSKPEDWDK), 244-255 (DPDAKKPEDWDE), 259-269 (GEWEPPVIQNP), 273-283 (GEWKPRQIDNP), and 287-297 (GTWIHPEIDNP). Residues 237–270 (DKPEHIPDPDAKKPEDWDEEMDGEWEPPVIQNPE) form an interaction with PPIB region. Residues 252 to 261 (DWDEEMDGEW) show a composition bias toward acidic residues. The 3 X approximate repeats stretch occupies residues 259–297 (GEWEPPVIQNPEYKGEWKPRQIDNPDYKGTWIHPEIDNP). The C-domain stretch occupies residues 309–417 (ENFAVLGLDL…AAAGQAKDEL (109 aa)). Position 317 (aspartate 317) interacts with an alpha-D-glucoside. Aspartate 328 contacts Ca(2+). A disordered region spans residues 350–417 (TKAAEKQMKD…AAAGQAKDEL (68 aa)). Over residues 352–379 (AAEKQMKDKQDEEQRLKEEEEEKKRKEE) the composition is skewed to basic and acidic residues. The span at 380–408 (EEVDKEDEEDKDEDEEEEDEKEEEEEEDA) shows a compositional bias: acidic residues. Residues 414-417 (KDEL) carry the Prevents secretion from ER motif.

This sequence belongs to the calreticulin family. As to quaternary structure, monomer. Component of an EIF2 complex at least composed of CELF1/CUGBP1, CALR, CALR3, EIF2S1, EIF2S2, HSP90B1 and HSPA5. Interacts with PDIA3/ERp57 and SPACA9. Interacts with TRIM21. Interacts with NR3C1. Interacts with PPIB. Interacts (via P-domain) with PDIA5. Interacts with CLCC1. As to expression, in blastocyst expressed in all blastomeres (at protein level). In embryos, expressed in spleen, kidney, liver, fat, muscle, ovary, granulosa cells and cumulus cells.

Its subcellular location is the endoplasmic reticulum lumen. It is found in the cytoplasm. The protein localises to the cytosol. The protein resides in the secreted. It localises to the extracellular space. Its subcellular location is the extracellular matrix. It is found in the cell surface. The protein localises to the sarcoplasmic reticulum lumen. The protein resides in the cytoplasmic vesicle. It localises to the secretory vesicle. Its subcellular location is the cortical granule. It is found in the cytolytic granule. Its function is as follows. Calcium-binding chaperone that promotes folding, oligomeric assembly and quality control in the endoplasmic reticulum (ER) via the calreticulin/calnexin cycle. This lectin interacts transiently with almost all of the monoglucosylated glycoproteins that are synthesized in the ER. Interacts with the DNA-binding domain of NR3C1 and mediates its nuclear export. Involved in maternal gene expression regulation. May participate in oocyte maturation via the regulation of calcium homeostasis. Present in the cortical granules of non-activated oocytes, is exocytosed during the cortical reaction in response to oocyte activation and might participate in the block to polyspermy. This Sus scrofa (Pig) protein is Calreticulin (CALR).